Here is a 339-residue protein sequence, read N- to C-terminus: Ketol-acid reductoisomerase (NADP(+)) (339 aa).

The KARI N-terminal Rossmann domain maps to 1–182 (MRVYYDRDAD…GGGRSGIIET (182 aa)). Residues 24 to 27 (YGSQ), K48, S51, T53, and 83 to 86 (DELQ) contribute to the NADP(+) site. The active site involves H108. G134 contributes to the NADP(+) binding site. Positions 183-328 (TFQEECETDL…AKLRGMMPWI (146 aa)) constitute a KARI C-terminal knotted domain. Residues D191, E195, E227, and E231 each contribute to the Mg(2+) site. S252 provides a ligand contact to substrate.

Belongs to the ketol-acid reductoisomerase family. Mg(2+) serves as cofactor.

It carries out the reaction (2R)-2,3-dihydroxy-3-methylbutanoate + NADP(+) = (2S)-2-acetolactate + NADPH + H(+). It catalyses the reaction (2R,3R)-2,3-dihydroxy-3-methylpentanoate + NADP(+) = (S)-2-ethyl-2-hydroxy-3-oxobutanoate + NADPH + H(+). It functions in the pathway amino-acid biosynthesis; L-isoleucine biosynthesis; L-isoleucine from 2-oxobutanoate: step 2/4. The protein operates within amino-acid biosynthesis; L-valine biosynthesis; L-valine from pyruvate: step 2/4. Its function is as follows. Involved in the biosynthesis of branched-chain amino acids (BCAA). Catalyzes an alkyl-migration followed by a ketol-acid reduction of (S)-2-acetolactate (S2AL) to yield (R)-2,3-dihydroxy-isovalerate. In the isomerase reaction, S2AL is rearranged via a Mg-dependent methyl migration to produce 3-hydroxy-3-methyl-2-ketobutyrate (HMKB). In the reductase reaction, this 2-ketoacid undergoes a metal-dependent reduction by NADPH to yield (R)-2,3-dihydroxy-isovalerate. The polypeptide is Ketol-acid reductoisomerase (NADP(+)) (Allorhizobium ampelinum (strain ATCC BAA-846 / DSM 112012 / S4) (Agrobacterium vitis (strain S4))).